The primary structure comprises 136 residues: Large ribosomal subunit protein uL16c (136 aa).

Belongs to the universal ribosomal protein uL16 family. As to quaternary structure, part of the 50S ribosomal subunit.

Its subcellular location is the plastid. It localises to the chloroplast. The sequence is that of Large ribosomal subunit protein uL16c from Guizotia abyssinica (Niger).